The chain runs to 431 residues: Shaggy-related protein kinase beta (431 aa).

Polar residues predominate over residues 12-24 (SGRNFVSSDNVGE). Residues 12 to 65 (SGRNFVSSDNVGETETPRSKPNQNREETESTETTSYEKDSVSSSENSDHLPKEI) are disordered. Composition is skewed to basic and acidic residues over residues 26-39 (ETPR…REET) and 46-65 (SYEK…PKEI). Residues 102–386 (YRAEHVIGTG…ALEACAHPFF (285 aa)) form the Protein kinase domain. Residues 108 to 116 (IGTGSFGVV) and Lys131 each bind ATP. The active-site Proton acceptor is Asp227. The residue at position 262 (Tyr262) is a Phosphotyrosine.

It belongs to the protein kinase superfamily. CMGC Ser/Thr protein kinase family. GSK-3 subfamily. Post-translationally, autophosphorylated mainly on threonine and serine residues.

It carries out the reaction L-seryl-[protein] + ATP = O-phospho-L-seryl-[protein] + ADP + H(+). It catalyses the reaction L-threonyl-[protein] + ATP = O-phospho-L-threonyl-[protein] + ADP + H(+). Its function is as follows. May mediate extracellular signals to regulate transcription in differentiating cells. This is Shaggy-related protein kinase beta from Arabidopsis thaliana (Mouse-ear cress).